Consider the following 282-residue polypeptide: Bacterial lipoprotein FTN_1103 (282 aa).

An N-terminal signal peptide occupies residues 1–28 (MKYGNLMMTKKKLLIGMVTISGIVILGS). Cysteine 29 is lipidated: N-palmitoyl cysteine. The S-diacylglycerol cysteine moiety is linked to residue cysteine 29.

The protein resides in the cell membrane. Functionally, stimulates the host immune inflammatory signaling system allowing the host to combat the bacteria. Stimulates mouse interleukin-6 (Il6) production. The chain is Bacterial lipoprotein FTN_1103 from Francisella tularensis subsp. novicida (strain U112).